Consider the following 207-residue polypeptide: Large ribosomal subunit protein bL25 (207 aa).

Positions 171 to 207 are disordered; the sequence is ESVVTVEVPEDATESTTAPEAAAAPADAAAAPAADAK. The span at 184–207 shows a compositional bias: low complexity; that stretch reads ESTTAPEAAAAPADAAAAPAADAK.

It belongs to the bacterial ribosomal protein bL25 family. CTC subfamily. As to quaternary structure, part of the 50S ribosomal subunit; part of the 5S rRNA/L5/L18/L25 subcomplex. Contacts the 5S rRNA. Binds to the 5S rRNA independently of L5 and L18.

This is one of the proteins that binds to the 5S RNA in the ribosome where it forms part of the central protuberance. The sequence is that of Large ribosomal subunit protein bL25 from Bifidobacterium longum subsp. infantis (strain ATCC 15697 / DSM 20088 / JCM 1222 / NCTC 11817 / S12).